Reading from the N-terminus, the 472-residue chain is Argininosuccinate lyase (472 aa).

The protein belongs to the lyase 1 family. Argininosuccinate lyase subfamily.

The protein resides in the cytoplasm. It carries out the reaction 2-(N(omega)-L-arginino)succinate = fumarate + L-arginine. Its pathway is amino-acid biosynthesis; L-arginine biosynthesis; L-arginine from L-ornithine and carbamoyl phosphate: step 3/3. The polypeptide is Argininosuccinate lyase (Synechococcus sp. (strain CC9605)).